Here is a 262-residue protein sequence, read N- to C-terminus: Zinc finger protein ehn-3 (262 aa).

4 consecutive C2H2-type zinc fingers follow at residues 2–24 (EKCDICHQKFSNKTNLNRHKVMH), 30–52 (FECQFCRRPFFRNDRMKEHMMTH), 59–84 (FECPITACNSKFNSFTSLQFHVDSEH), and 92–115 (AKCKSCIKWFNSSHRLLLHFHTAH). Positions 179 to 204 (SVKSAKELSPTPSTEIETPEEEELDG) are disordered. Residues 185-194 (ELSPTPSTEI) are compositionally biased toward low complexity. The segment covering 195–204 (ETPEEEELDG) has biased composition (acidic residues). 2 consecutive C2H2-type zinc fingers follow at residues 208-230 (WYCDYCKIRFDDKVMWYLHSGLH) and 236-260 (FKCSLCGSLCDGKYDFAAHLVYANH).

This sequence belongs to the krueppel C2H2-type zinc-finger protein family.

Its subcellular location is the nucleus. In terms of biological role, together with the zinc finger protein ztf-16, plays a role in gonadogenesis, specifically in somatic gonad precursor cell development. This is possibly by regulating tra-1 gene expression. Required for proper gonadal primordium assembly and somatic gonad precursor cell morphology. In Caenorhabditis elegans, this protein is Zinc finger protein ehn-3.